The following is a 336-amino-acid chain: DNA polymerase III subunit delta' (336 aa).

DNA polymerase III contains a core (composed of alpha, epsilon and theta chains) that associates with a tau subunit. This core dimerizes to form the POLIII' complex. PolIII' associates with the gamma complex (composed of gamma, delta, delta', psi and chi chains) and with the beta chain to form the complete DNA polymerase III complex.

The enzyme catalyses DNA(n) + a 2'-deoxyribonucleoside 5'-triphosphate = DNA(n+1) + diphosphate. DNA polymerase III is a complex, multichain enzyme responsible for most of the replicative synthesis in bacteria. This DNA polymerase also exhibits 3' to 5' exonuclease activity. This chain is DNA polymerase III subunit delta' (holB), found in Buchnera aphidicola subsp. Baizongia pistaciae (strain Bp).